The chain runs to 461 residues: Transcription factor SOX-10 (461 aa).

Disordered regions lie at residues 1 to 60 (MADD…ADDD), 154 to 191 (LRMQ…GEAG), 205 to 268 (LDHR…DFGN), 350 to 369 (KAQV…DQPS), and 433 to 461 (AISD…LSRP). Over residues 30–42 (ASDNSSHLASSGN) the composition is skewed to polar residues. Residues 56–96 (EADDDKFPVCIREAVSQVLSGYDWTLVPMPVRVNGSNKSKP) form a dimerization (DIM) region. A DNA-binding region (HMG box) is located at residues 98-166 (VKRPMNAFMV…QHKKDHPDYK (69 aa)). Positions 154–167 (LRMQHKKDHPDYKY) are enriched in basic and acidic residues. Residues 181-191 (EGEGQVEGEAG) are compositionally biased toward gly residues. A transactivation domain (TAM) region spans residues 221–306 (PEHSSGQSHG…NGHAGHPGHV (86 aa)). A compositionally biased stretch (basic and acidic residues) spans 247–264 (ADSKREGRSLGEGGKPHI). Positions 350-461 (KAQVKTEGSA…QPVYTTLSRP (112 aa)) are transactivation domain (TAC). Over residues 441-461 (VPQSHSPTHWEQPVYTTLSRP) the composition is skewed to polar residues.

The protein resides in the cytoplasm. Its subcellular location is the nucleus. Functionally, transcription factor that plays a central role in developing and mature glia. Specifically activates expression of myelin genes, during oligodendrocyte (OL) maturation, thereby playing a central role in oligodendrocyte maturation and CNS myelination. The polypeptide is Transcription factor SOX-10 (SOX10) (Gallus gallus (Chicken)).